Here is a 436-residue protein sequence, read N- to C-terminus: mRNA cap guanine-N(7) methyltransferase (436 aa).

A disordered region spans residues 1–50 (MSTKPEKPIWMSQEDYDRQYGSITGDESSTVSKKDSKVTANAPGDGNGSL). An mRNA cap 0 methyltransferase domain is found at 141 to 424 (SPIIKLRNFN…FYTMFAFRKV (284 aa)). An mRNA-binding site is contributed by 150 to 151 (NN). Positions 154, 172, 194, 223, 249, and 254 each coordinate S-adenosyl-L-methionine.

It belongs to the class I-like SAM-binding methyltransferase superfamily. mRNA cap 0 methyltransferase family.

Its subcellular location is the nucleus. It carries out the reaction a 5'-end (5'-triphosphoguanosine)-ribonucleoside in mRNA + S-adenosyl-L-methionine = a 5'-end (N(7)-methyl 5'-triphosphoguanosine)-ribonucleoside in mRNA + S-adenosyl-L-homocysteine. Functionally, responsible for methylating the 5'-cap structure of mRNAs. The polypeptide is mRNA cap guanine-N(7) methyltransferase (ABD1) (Saccharomyces cerevisiae (strain ATCC 204508 / S288c) (Baker's yeast)).